The chain runs to 209 residues: Small ribosomal subunit protein uS4 (209 aa).

The S4 RNA-binding domain occupies 99–179 (GRLDSVAYRM…FPEWIEVDAK (81 aa)).

Belongs to the universal ribosomal protein uS4 family. As to quaternary structure, part of the 30S ribosomal subunit. Contacts protein S5. The interaction surface between S4 and S5 is involved in control of translational fidelity.

One of the primary rRNA binding proteins, it binds directly to 16S rRNA where it nucleates assembly of the body of the 30S subunit. Functionally, with S5 and S12 plays an important role in translational accuracy. This is Small ribosomal subunit protein uS4 from Azoarcus sp. (strain BH72).